The sequence spans 393 residues: Short-chain dehydrogenase/reductase family 42E member 1 (393 aa).

Tyr152 serves as the catalytic Proton acceptor. Lys156 contacts NAD(+). A run of 2 helical transmembrane segments spans residues 282-302 and 371-391; these read LPLT…FILG and GLLV…SVIL.

It belongs to the 3-beta-HSD family.

Its subcellular location is the membrane. In Macaca fascicularis (Crab-eating macaque), this protein is Short-chain dehydrogenase/reductase family 42E member 1 (SDR42E1).